The chain runs to 61 residues: Large ribosomal subunit protein eL37 (61 aa).

Residues C18, C21, C33, and C36 each coordinate Zn(2+). The segment at C18–C36 adopts a C4-type zinc-finger fold.

The protein belongs to the eukaryotic ribosomal protein eL37 family. Requires Zn(2+) as cofactor.

Its function is as follows. Binds to the 23S rRNA. The polypeptide is Large ribosomal subunit protein eL37 (Methanosphaera stadtmanae (strain ATCC 43021 / DSM 3091 / JCM 11832 / MCB-3)).